The primary structure comprises 104 residues: Large ribosomal subunit protein bL21 (104 aa).

This sequence belongs to the bacterial ribosomal protein bL21 family. Part of the 50S ribosomal subunit. Contacts protein L20.

In terms of biological role, this protein binds to 23S rRNA in the presence of protein L20. In Clostridium botulinum (strain 657 / Type Ba4), this protein is Large ribosomal subunit protein bL21.